The sequence spans 319 residues: Lipoyl synthase (319 aa).

The segment at 1 to 29 (MVVVVDTVSDKPIRPRHPEKAARPDALSP) is disordered. A compositionally biased stretch (basic and acidic residues) spans 8 to 29 (VSDKPIRPRHPEKAARPDALSP). [4Fe-4S] cluster is bound by residues C61, C66, C72, C87, C91, C94, and S300. In terms of domain architecture, Radical SAM core spans 73–289 (WDRKHATFMI…ESLAYAKGFL (217 aa)).

Belongs to the radical SAM superfamily. Lipoyl synthase family. [4Fe-4S] cluster is required as a cofactor.

Its subcellular location is the cytoplasm. The catalysed reaction is [[Fe-S] cluster scaffold protein carrying a second [4Fe-4S](2+) cluster] + N(6)-octanoyl-L-lysyl-[protein] + 2 oxidized [2Fe-2S]-[ferredoxin] + 2 S-adenosyl-L-methionine + 4 H(+) = [[Fe-S] cluster scaffold protein] + N(6)-[(R)-dihydrolipoyl]-L-lysyl-[protein] + 4 Fe(3+) + 2 hydrogen sulfide + 2 5'-deoxyadenosine + 2 L-methionine + 2 reduced [2Fe-2S]-[ferredoxin]. It functions in the pathway protein modification; protein lipoylation via endogenous pathway; protein N(6)-(lipoyl)lysine from octanoyl-[acyl-carrier-protein]: step 2/2. In terms of biological role, catalyzes the radical-mediated insertion of two sulfur atoms into the C-6 and C-8 positions of the octanoyl moiety bound to the lipoyl domains of lipoate-dependent enzymes, thereby converting the octanoylated domains into lipoylated derivatives. This is Lipoyl synthase from Rhodopseudomonas palustris (strain BisA53).